The chain runs to 43 residues: Potassium channel toxin gamma-KTx 4.7 (43 aa).

Disulfide bonds link Cys-5–Cys-23, Cys-11–Cys-34, Cys-20–Cys-39, and Cys-24–Cys-41.

It belongs to the ergtoxin family. Gamma-KTx 4 subfamily. As to expression, expressed by the venom gland.

Its subcellular location is the secreted. Its function is as follows. Reversibly blocks Kv11/ERG potassium channels. This is Potassium channel toxin gamma-KTx 4.7 from Centruroides limpidus (Mexican scorpion).